Consider the following 306-residue polypeptide: Ornithine carbamoyltransferase (306 aa).

Carbamoyl phosphate is bound by residues 53–56, Gln80, Arg104, and 131–134; these read STRT and HPCQ. Residues Asn162, Asp220, and 224–225 contribute to the L-ornithine site; that span reads SM. Carbamoyl phosphate contacts are provided by residues 260–261 and Arg288; that span reads CL.

It belongs to the aspartate/ornithine carbamoyltransferase superfamily. OTCase family.

Its subcellular location is the cytoplasm. The enzyme catalyses carbamoyl phosphate + L-ornithine = L-citrulline + phosphate + H(+). It functions in the pathway amino-acid biosynthesis; L-arginine biosynthesis; L-arginine from L-ornithine and carbamoyl phosphate: step 1/3. Functionally, reversibly catalyzes the transfer of the carbamoyl group from carbamoyl phosphate (CP) to the N(epsilon) atom of ornithine (ORN) to produce L-citrulline. The sequence is that of Ornithine carbamoyltransferase from Methylobacillus flagellatus (strain ATCC 51484 / DSM 6875 / VKM B-1610 / KT).